Consider the following 177-residue polypeptide: Adenine phosphoribosyltransferase (177 aa).

It belongs to the purine/pyrimidine phosphoribosyltransferase family. In terms of assembly, homodimer.

Its subcellular location is the cytoplasm. It carries out the reaction AMP + diphosphate = 5-phospho-alpha-D-ribose 1-diphosphate + adenine. It participates in purine metabolism; AMP biosynthesis via salvage pathway; AMP from adenine: step 1/1. Its function is as follows. Catalyzes a salvage reaction resulting in the formation of AMP, that is energically less costly than de novo synthesis. This chain is Adenine phosphoribosyltransferase, found in Mycoplasma pneumoniae (strain ATCC 29342 / M129 / Subtype 1) (Mycoplasmoides pneumoniae).